Consider the following 623-residue polypeptide: Chaperone protein DnaK (623 aa).

A Phosphothreonine; by autocatalysis modification is found at Thr-197. The disordered stretch occupies residues Lys-600–Glu-623.

It belongs to the heat shock protein 70 family.

Its function is as follows. Acts as a chaperone. The chain is Chaperone protein DnaK from Campylobacter concisus (strain 13826).